Reading from the N-terminus, the 552-residue chain is Thermosome subunit beta (552 aa).

Positions 531-552 (AGKKGGSEPGGKKEKEEKSSED) are disordered. A compositionally biased stretch (basic and acidic residues) spans 540-552 (GGKKEKEEKSSED).

The protein belongs to the TCP-1 chaperonin family. As to quaternary structure, forms a heterooligomeric complex of two stacked nine-membered rings; one of alpha and the other of beta subunits. Sometimes called a 'rosettasome'.

Its subcellular location is the cytoplasm. The catalysed reaction is ATP + H2O = ADP + phosphate + H(+). Functionally, molecular chaperone; binds unfolded polypeptides in vitro, stimulates protein folding and has ATPase activity. One of the most abundant proteins in the cell at all temperatures. This is Thermosome subunit beta (thsB) from Saccharolobus shibatae (strain ATCC 51178 / DSM 5389 / JCM 8931 / NBRC 15437 / B12) (Sulfolobus shibatae).